We begin with the raw amino-acid sequence, 182 residues long: UPF0200 protein Mboo_1593 (182 aa).

An ATP-binding site is contributed by 8 to 15 (GLPASGKG).

Belongs to the UPF0200 family.

This chain is UPF0200 protein Mboo_1593, found in Methanoregula boonei (strain DSM 21154 / JCM 14090 / 6A8).